A 104-amino-acid polypeptide reads, in one-letter code: uncharacterized protein (104 aa).

Positions 62-92 are disordered; it reads SSPAASSHPRKRGKEKKERTPTERLAAPARK.

This is an uncharacterized protein from Human adenovirus B serotype 7 (HAdV-7).